A 158-amino-acid polypeptide reads, in one-letter code: Probable cyclic pyranopterin monophosphate synthase (158 aa).

Substrate is bound by residues 75–77 and 111–112; these read MCH and ME. The active site involves Asp126.

This sequence belongs to the MoaC family. In terms of assembly, homohexamer; trimer of dimers.

The catalysed reaction is (8S)-3',8-cyclo-7,8-dihydroguanosine 5'-triphosphate = cyclic pyranopterin phosphate + diphosphate. It functions in the pathway cofactor biosynthesis; molybdopterin biosynthesis. Catalyzes the conversion of (8S)-3',8-cyclo-7,8-dihydroguanosine 5'-triphosphate to cyclic pyranopterin monophosphate (cPMP). The sequence is that of Probable cyclic pyranopterin monophosphate synthase from Methanocorpusculum labreanum (strain ATCC 43576 / DSM 4855 / Z).